The chain runs to 309 residues: Homoserine kinase (309 aa).

91 to 101 contacts ATP; that stretch reads PIGSGLGSSAC.

Belongs to the GHMP kinase family. Homoserine kinase subfamily.

The protein localises to the cytoplasm. The catalysed reaction is L-homoserine + ATP = O-phospho-L-homoserine + ADP + H(+). It participates in amino-acid biosynthesis; L-threonine biosynthesis; L-threonine from L-aspartate: step 4/5. Functionally, catalyzes the ATP-dependent phosphorylation of L-homoserine to L-homoserine phosphate. The chain is Homoserine kinase from Klebsiella pneumoniae subsp. pneumoniae (strain ATCC 700721 / MGH 78578).